Consider the following 46-residue polypeptide: MLILLNTFAELPEAYKAFAPTVDVLPLIPLFFFLLVFVWQAAVGFK.

Residues 1 to 9 (MLILLNTFA) constitute a propeptide that is removed on maturation. A helical membrane pass occupies residues 25–45 (LPLIPLFFFLLVFVWQAAVGF).

Belongs to the PsbK family. PSII is composed of 1 copy each of membrane proteins PsbA, PsbB, PsbC, PsbD, PsbE, PsbF, PsbH, PsbI, PsbJ, PsbK, PsbL, PsbM, PsbT, PsbX, PsbY, Psb30/Ycf12, peripheral proteins PsbO, CyanoQ (PsbQ), PsbU, PsbV and a large number of cofactors. It forms dimeric complexes.

Its subcellular location is the cellular thylakoid membrane. One of the components of the core complex of photosystem II (PSII). PSII is a light-driven water:plastoquinone oxidoreductase that uses light energy to abstract electrons from H(2)O, generating O(2) and a proton gradient subsequently used for ATP formation. It consists of a core antenna complex that captures photons, and an electron transfer chain that converts photonic excitation into a charge separation. The sequence is that of Photosystem II reaction center protein K from Prochlorococcus marinus (strain MIT 9215).